Consider the following 312-residue polypeptide: Very-long-chain 3-oxoacyl-CoA reductase (312 aa).

Transmembrane regions (helical) follow at residues 33–53 (VWGI…WAVV), 181–201 (GVIL…LTLY), and 274–294 (HAFM…NLLM). 48-77 (GAWAVVTGATDGIGKAYAKELAKRGMKVAL) serves as a coordination point for NADP(+). A substrate-binding site is contributed by Ser-188. Tyr-201 serves as the catalytic Proton acceptor.

The protein belongs to the short-chain dehydrogenases/reductases (SDR) family. 17-beta-HSD 3 subfamily. In terms of tissue distribution, brain.

It localises to the endoplasmic reticulum membrane. The catalysed reaction is a very-long-chain (3R)-3-hydroxyacyl-CoA + NADP(+) = a very-long-chain 3-oxoacyl-CoA + NADPH + H(+). It catalyses the reaction 17beta-estradiol + NAD(+) = estrone + NADH + H(+). It carries out the reaction 17beta-estradiol + NADP(+) = estrone + NADPH + H(+). The enzyme catalyses 3-oxooctadecanoyl-CoA + NADPH + H(+) = (3R)-hydroxyoctadecanoyl-CoA + NADP(+). The catalysed reaction is (7Z,10Z,13Z,16Z)-3-oxodocosatetraenoyl-CoA + NADPH + H(+) = (3R)-hydroxy-(7Z,10Z,13Z,16Z)-docosatetraenoyl-CoA + NADP(+). It catalyses the reaction 3-oxo-(7Z,10Z,13Z,16Z,19Z)-docosapentaenoyl-CoA + NADPH + H(+) = (3R)-hydroxy-(7Z,10Z,13Z,16Z,19Z)-docosapentaenoyl-CoA + NADP(+). It carries out the reaction (8Z,11Z,14Z)-3-oxoeicosatrienoyl-CoA + NADPH + H(+) = (3R)-hydroxy-(8Z,11Z,14Z)-eicosatrienoyl-CoA + NADP(+). The protein operates within lipid metabolism; fatty acid biosynthesis. It participates in steroid biosynthesis; estrogen biosynthesis. Functionally, catalyzes the second of the four reactions of the long-chain fatty acids elongation cycle. This endoplasmic reticulum-bound enzymatic process, allows the addition of two carbons to the chain of long- and very long-chain fatty acids/VLCFAs per cycle. This enzyme has a 3-ketoacyl-CoA reductase activity, reducing 3-ketoacyl-CoA to 3-hydroxyacyl-CoA, within each cycle of fatty acid elongation. Thereby, it may participate in the production of VLCFAs of different chain lengths that are involved in multiple biological processes as precursors of membrane lipids and lipid mediators. May also catalyze the transformation of estrone (E1) into estradiol (E2) and play a role in estrogen formation. This Anas platyrhynchos (Mallard) protein is Very-long-chain 3-oxoacyl-CoA reductase (HSD17B12).